Reading from the N-terminus, the 427-residue chain is Probable glucuronosyltransferase Os03g0107900 (427 aa).

Over 1 to 33 the chain is Cytoplasmic; that stretch reads MAMRGDPKQRRASASAPHGGAAHHVADKLRRHS. A helical; Signal-anchor for type II membrane protein membrane pass occupies residues 34–54; that stretch reads TFLLLLLLLWFALSLYLFLSA. Topologically, residues 55–427 are lumenal; that stretch reads TPPPPRPAFL…QRRHVESWKR (373 aa). Residues Asn136, Asn168, Asn264, and Asn374 are each glycosylated (N-linked (GlcNAc...) asparagine).

Belongs to the glycosyltransferase 47 family.

It is found in the golgi apparatus membrane. Its function is as follows. Involved in the synthesis of glucuronoxylan hemicellulose in secondary cell walls. The sequence is that of Probable glucuronosyltransferase Os03g0107900 from Oryza sativa subsp. japonica (Rice).